A 343-amino-acid polypeptide reads, in one-letter code: Small ribosomal subunit biogenesis GTPase RsgA (343 aa).

One can recognise a CP-type G domain in the interval 116-275; sequence RGQLKPVAAN…LIDSPGIREF (160 aa). GTP contacts are provided by residues 163–166 and 217–225; these read NKAD and GQSGVGKSS. 4 residues coordinate Zn(2+): C299, C304, H306, and C312.

This sequence belongs to the TRAFAC class YlqF/YawG GTPase family. RsgA subfamily. As to quaternary structure, monomer. Associates with 30S ribosomal subunit, binds 16S rRNA. The cofactor is Zn(2+).

The protein localises to the cytoplasm. Its function is as follows. One of several proteins that assist in the late maturation steps of the functional core of the 30S ribosomal subunit. Helps release RbfA from mature subunits. May play a role in the assembly of ribosomal proteins into the subunit. Circularly permuted GTPase that catalyzes slow GTP hydrolysis, GTPase activity is stimulated by the 30S ribosomal subunit. This is Small ribosomal subunit biogenesis GTPase RsgA from Pseudomonas savastanoi pv. phaseolicola (strain 1448A / Race 6) (Pseudomonas syringae pv. phaseolicola (strain 1448A / Race 6)).